The chain runs to 358 residues: Extracellular phospholipase C (358 aa).

It localises to the secreted. This Dickeya chrysanthemi (Pectobacterium chrysanthemi) protein is Extracellular phospholipase C (plcA).